A 782-amino-acid polypeptide reads, in one-letter code: Translation initiation factor IF-2 (782 aa).

Residues 1–14 show a composition bias toward basic and acidic residues; it reads MSKNIDDKNEDGKK. Disordered regions lie at residues 1–106 and 132–174; these read MSKN…KKTY and SIVS…AETE. Residues 15–25 show a composition bias toward basic residues; sequence IKIIKLRKKVV. Residues 31–43 are compositionally biased toward polar residues; it reads NDLSGKNNPSGST. Residues 44–61 are compositionally biased toward basic and acidic residues; the sequence is DLHKHNNKVEYSHSRDGR. Composition is skewed to polar residues over residues 86 to 106 and 133 to 142; these read GYSQ…KKTY and IVSSASSTDS. Residues 143-159 are compositionally biased toward basic and acidic residues; sequence ENSKELNRKLGEKKKQQ. Residues 280–453 form the tr-type G domain; it reads EKPPVITIMG…DMMLLKANPS (174 aa). Residues 289-296 are G1; the sequence is GHVDHGKT. Position 289-296 (289-296) interacts with GTP; sequence GHVDHGKT. Residues 314–318 form a G2 region; sequence GITQH. The G3 stretch occupies residues 335 to 338; it reads DTPG. Residues 335–339 and 389–392 contribute to the GTP site; these read DTPGH and NKID. Residues 389–392 are G4; it reads NKID. The tract at residues 425–427 is G5; it reads SAL.

It belongs to the TRAFAC class translation factor GTPase superfamily. Classic translation factor GTPase family. IF-2 subfamily.

It localises to the cytoplasm. In terms of biological role, one of the essential components for the initiation of protein synthesis. Protects formylmethionyl-tRNA from spontaneous hydrolysis and promotes its binding to the 30S ribosomal subunits. Also involved in the hydrolysis of GTP during the formation of the 70S ribosomal complex. The polypeptide is Translation initiation factor IF-2 (Borreliella afzelii (strain PKo) (Borrelia afzelii)).